We begin with the raw amino-acid sequence, 140 residues long: ATP synthase epsilon chain (140 aa).

This sequence belongs to the ATPase epsilon chain family. In terms of assembly, F-type ATPases have 2 components, CF(1) - the catalytic core - and CF(0) - the membrane proton channel. CF(1) has five subunits: alpha(3), beta(3), gamma(1), delta(1), epsilon(1). CF(0) has three main subunits: a, b and c.

The protein resides in the cell inner membrane. Produces ATP from ADP in the presence of a proton gradient across the membrane. The chain is ATP synthase epsilon chain from Neisseria meningitidis serogroup C (strain 053442).